The chain runs to 221 residues: Uracil-DNA glycosylase 1 (221 aa).

Asp61 serves as the catalytic Proton acceptor.

The protein belongs to the uracil-DNA glycosylase (UDG) superfamily. UNG family.

The protein localises to the cytoplasm. The enzyme catalyses Hydrolyzes single-stranded DNA or mismatched double-stranded DNA and polynucleotides, releasing free uracil.. In terms of biological role, excises uracil residues from the DNA which can arise as a result of misincorporation of dUMP residues by DNA polymerase or due to deamination of cytosine. In Listeria monocytogenes serovar 1/2a (strain ATCC BAA-679 / EGD-e), this protein is Uracil-DNA glycosylase 1.